Consider the following 596-residue polypeptide: Cis-3-hydroxy-L-proline dehydratase (596 aa).

Catalysis depends on serine 67, which acts as the Proton acceptor.

This sequence belongs to the AcnX family. In terms of assembly, monomer. Requires Fe(3+) as cofactor.

The enzyme catalyses cis-3-hydroxy-L-proline = 1-pyrroline-2-carboxylate + H2O. Inhibited by Zn(2+). Not inhibited by pyrrole-2-carboxylate nor its derivative 2-thiophenecarboxylate. Catalyzes the dehydration of cis-3-hydroxy-L-proline (c3LHyp) to Delta(1)-pyrroline-2-carboxylate (Pyr2C). No activity with L-proline, trans-4-hydroxy-L-proline (t4LHyp), cis-4-hydroxy-L-proline (c4LHyp), trans-3-hydroxy-L-proline (t3LHyp), D-proline, cis-4-hydroxy-D-proline (c4DHyp), trans-4-hydroxy-D-proline (t4DHyp) or L-serine as substrates. Because of the low catalytic efficiency, C3LHyp is likely not a main physiological substrate of this enzyme in H.jecorina. The chain is Cis-3-hydroxy-L-proline dehydratase from Hypocrea jecorina (strain QM6a) (Trichoderma reesei).